A 235-amino-acid polypeptide reads, in one-letter code: 7-cyano-7-deazaguanine synthase (235 aa).

12–22 (FSGGQDSTTCL) lines the ATP pocket. Positions 200, 215, 218, and 221 each coordinate Zn(2+).

This sequence belongs to the QueC family. It depends on Zn(2+) as a cofactor.

It carries out the reaction 7-carboxy-7-deazaguanine + NH4(+) + ATP = 7-cyano-7-deazaguanine + ADP + phosphate + H2O + H(+). It participates in purine metabolism; 7-cyano-7-deazaguanine biosynthesis. Catalyzes the ATP-dependent conversion of 7-carboxy-7-deazaguanine (CDG) to 7-cyano-7-deazaguanine (preQ(0)). This is 7-cyano-7-deazaguanine synthase from Leptothrix cholodnii (strain ATCC 51168 / LMG 8142 / SP-6) (Leptothrix discophora (strain SP-6)).